A 261-amino-acid chain; its full sequence is Hydrolase in agr operon (261 aa).

The region spanning 1–239 (MKVQIYQLPI…ADILTVDLNL (239 aa)) is the CN hydrolase domain. The active-site Proton acceptor is glutamate 41. Residue lysine 110 is the Proton donor of the active site. The active-site Nucleophile is the cysteine 146.

This sequence belongs to the carbon-nitrogen hydrolase superfamily. NIT1/NIT2 family.

In Staphylococcus aureus, this protein is Hydrolase in agr operon.